The chain runs to 365 residues: Succinyl-diaminopimelate desuccinylase (365 aa).

Histidine 65 lines the Zn(2+) pocket. Residue aspartate 67 is part of the active site. A Zn(2+)-binding site is contributed by aspartate 96. Catalysis depends on glutamate 126, which acts as the Proton acceptor. Residues glutamate 127, glutamate 155, and histidine 340 each coordinate Zn(2+).

The protein belongs to the peptidase M20A family. DapE subfamily. Homodimer. Requires Zn(2+) as cofactor. Co(2+) is required as a cofactor.

The catalysed reaction is N-succinyl-(2S,6S)-2,6-diaminopimelate + H2O = (2S,6S)-2,6-diaminopimelate + succinate. It functions in the pathway amino-acid biosynthesis; L-lysine biosynthesis via DAP pathway; LL-2,6-diaminopimelate from (S)-tetrahydrodipicolinate (succinylase route): step 3/3. Catalyzes the hydrolysis of N-succinyl-L,L-diaminopimelic acid (SDAP), forming succinate and LL-2,6-diaminopimelate (DAP), an intermediate involved in the bacterial biosynthesis of lysine and meso-diaminopimelic acid, an essential component of bacterial cell walls. The polypeptide is Succinyl-diaminopimelate desuccinylase (Campylobacter jejuni subsp. jejuni serotype O:2 (strain ATCC 700819 / NCTC 11168)).